Consider the following 284-residue polypeptide: Deoxyribonuclease-1 (284 aa).

Positions 1–22 (MRYTGLMGILLTLVNLLQLAAT) are cleaved as a signal peptide. Asn-40 carries N-linked (GlcNAc...) asparagine glycosylation. The active site involves Glu-100. The cysteines at positions 123 and 126 are disulfide-linked. Residue Asn-128 is glycosylated (N-linked (GlcNAc...) asparagine). Residue His-156 is part of the active site. A disulfide bridge connects residues Cys-195 and Cys-231.

Belongs to the DNase I family. Ca(2+) is required as a cofactor. Mg(2+) serves as cofactor.

The protein resides in the secreted. It is found in the zymogen granule. It localises to the nucleus envelope. The enzyme catalyses Endonucleolytic cleavage to 5'-phosphodinucleotide and 5'-phosphooligonucleotide end-products.. Its function is as follows. Serum endocuclease secreted into body fluids by a wide variety of exocrine and endocrine organs. Expressed by non-hematopoietic tissues and preferentially cleaves protein-free DNA. Among other functions, seems to be involved in cell death by apoptosis. Binds specifically to G-actin and blocks actin polymerization. Together with DNASE1L3, plays a key role in degrading neutrophil extracellular traps (NETs). NETs are mainly composed of DNA fibers and are released by neutrophils to bind pathogens during inflammation. Degradation of intravascular NETs by DNASE1 and DNASE1L3 is required to prevent formation of clots that obstruct blood vessels and cause organ damage following inflammation. In Rattus norvegicus (Rat), this protein is Deoxyribonuclease-1 (Dnase1).